Consider the following 30-residue polypeptide: Cysteine-rich venom protein okinavin (30 aa).

A disordered region spans residues 1–30 (SVDFDSESPRKPXIQNEIVDLHNPLRRXVN).

The protein belongs to the CRISP family. Post-translationally, contains 8 disulfide bonds. In terms of tissue distribution, expressed by the venom gland.

The protein localises to the secreted. Functionally, inhibits calcium-activated potassium channels (KCa), voltage-gated potassium channel (Kv), and the calcium release channel/ryanodine receptor (RyR). This chain is Cysteine-rich venom protein okinavin, found in Ovophis okinavensis (Ryukyu Island pit viper).